A 254-amino-acid chain; its full sequence is Cell division protein DivIB (254 aa).

The Cytoplasmic portion of the chain corresponds to 1–21 (MPNAQIPVLKKNRTKKRTSRK). A helical membrane pass occupies residues 22-42 (IAILLILLFIVLLAVLFFRSS). Topologically, residues 43–254 (LSRVSEIRFD…EEGQEKDTTQ (212 aa)) are extracellular. In terms of domain architecture, POTRA spans 44-112 (SRVSEIRFDG…GIIAIHIKEF (69 aa)).

The protein belongs to the FtsQ/DivIB family. DivIB subfamily.

Its subcellular location is the cell membrane. In terms of biological role, cell division protein that may be involved in stabilizing or promoting the assembly of the division complex. This is Cell division protein DivIB from Paenibacillus polymyxa (strain E681).